The chain runs to 297 residues: Tyrosine recombinase XerD (297 aa).

A Core-binding (CB) domain is found at 1–86; the sequence is MKNLALIDLF…AMRKLFQYLY (86 aa). One can recognise a Tyr recombinase domain in the interval 107-291; that stretch reads RLPKYLTEQQ…AKERLKRLHE (185 aa). Residues arginine 147, lysine 171, histidine 243, arginine 246, and histidine 269 contribute to the active site. Catalysis depends on tyrosine 278, which acts as the O-(3'-phospho-DNA)-tyrosine intermediate.

This sequence belongs to the 'phage' integrase family. XerD subfamily. As to quaternary structure, forms a cyclic heterotetrameric complex composed of two molecules of XerC and two molecules of XerD.

The protein localises to the cytoplasm. Site-specific tyrosine recombinase, which acts by catalyzing the cutting and rejoining of the recombining DNA molecules. The XerC-XerD complex is essential to convert dimers of the bacterial chromosome into monomers to permit their segregation at cell division. It also contributes to the segregational stability of plasmids. The protein is Tyrosine recombinase XerD of Haemophilus influenzae (strain ATCC 51907 / DSM 11121 / KW20 / Rd).